We begin with the raw amino-acid sequence, 145 residues long: Immune protein Tsi4 (145 aa).

Transmembrane regions (helical) follow at residues I9–G29 and A109–F129.

It is found in the membrane. Functionally, immunity protein that plays a role in preventing early activation of toxin Tse4. The sequence is that of Immune protein Tsi4 from Pseudomonas aeruginosa (strain ATCC 15692 / DSM 22644 / CIP 104116 / JCM 14847 / LMG 12228 / 1C / PRS 101 / PAO1).